The sequence spans 463 residues: uncharacterized protein (463 aa).

Belongs to the UbiD family.

This is an uncharacterized protein from Rhodospirillum rubrum.